A 173-amino-acid chain; its full sequence is MAIILGIDPGSRVTGYGVIRQVGRQLSYLGSGCIRTKVDDLPSRLKLIYAGVTEIITQFQPDYFAIEQVFMAKNADSALKLGQARGVAIVAATNQALPVFEYAARQVKQTVVGIGSAEKSQVQHMVRTLLKLPANPQADAADALAIAITHCHVSQNAAQISETRLNLARGRLR.

Residues Asp-8, Glu-67, and Asp-139 contribute to the active site. Mg(2+)-binding residues include Asp-8, Glu-67, and Asp-139.

The protein belongs to the RuvC family. Homodimer which binds Holliday junction (HJ) DNA. The HJ becomes 2-fold symmetrical on binding to RuvC with unstacked arms; it has a different conformation from HJ DNA in complex with RuvA. In the full resolvosome a probable DNA-RuvA(4)-RuvB(12)-RuvC(2) complex forms which resolves the HJ. It depends on Mg(2+) as a cofactor.

The protein resides in the cytoplasm. It carries out the reaction Endonucleolytic cleavage at a junction such as a reciprocal single-stranded crossover between two homologous DNA duplexes (Holliday junction).. Functionally, the RuvA-RuvB-RuvC complex processes Holliday junction (HJ) DNA during genetic recombination and DNA repair. Endonuclease that resolves HJ intermediates. Cleaves cruciform DNA by making single-stranded nicks across the HJ at symmetrical positions within the homologous arms, yielding a 5'-phosphate and a 3'-hydroxyl group; requires a central core of homology in the junction. The consensus cleavage sequence is 5'-(A/T)TT(C/G)-3'. Cleavage occurs on the 3'-side of the TT dinucleotide at the point of strand exchange. HJ branch migration catalyzed by RuvA-RuvB allows RuvC to scan DNA until it finds its consensus sequence, where it cleaves and resolves the cruciform DNA. The protein is Crossover junction endodeoxyribonuclease RuvC of Klebsiella pneumoniae subsp. pneumoniae (strain ATCC 700721 / MGH 78578).